The chain runs to 325 residues: Glucosyl-3-phosphoglycerate synthase (325 aa).

Residues 37 to 41 (PSLNE), Ser71, Lys104, and 124 to 125 (DS) each bind UDP-alpha-D-glucose. Asp126 is a binding site for Mn(2+). 171 to 174 (GRVT) provides a ligand contact to (2R)-3-phosphoglycerate. Residues 216–219 (YGVE) and 243–248 (RIHDNQ) each bind UDP-alpha-D-glucose. His245 is a Mn(2+) binding site. Asn247 is a binding site for (2R)-3-phosphoglycerate.

Belongs to the glycosyltransferase 2 family. In terms of assembly, homodimer in solution. Co(2+) serves as cofactor. The cofactor is Mg(2+). Mn(2+) is required as a cofactor. It depends on Ni(2+) as a cofactor. Requires Zn(2+) as cofactor.

The catalysed reaction is an NDP-alpha-D-glucose + (2R)-3-phosphoglycerate = (2R)-2-O-(alpha-D-glucopyranosyl)-3-phospho-glycerate + a ribonucleoside 5'-diphosphate + H(+). The enzyme catalyses (2R)-3-phosphoglycerate + UDP-alpha-D-glucose = (2R)-2-O-(alpha-D-glucopyranosyl)-3-phospho-glycerate + UDP + H(+). It carries out the reaction ADP-alpha-D-glucose + (2R)-3-phosphoglycerate = (2R)-2-O-(alpha-D-glucopyranosyl)-3-phospho-glycerate + ADP + H(+). With respect to regulation, inhibited by ADP and EDTA. In terms of biological role, involved in the biosynthesis of the compatible solute mannosylglucosylglycerate through a phosphorylating pathway. Catalyzes the transfer of the glucose moiety from a nuleotide sugar such as UDP-alpha-D-glucose to the position 2 of 3-phospho-D-glycerate (3-PGA) to form glucosyl-3-phosphoglycerate (GPG). UDP-glucose is the preferred substrate, but it can be partially replaced by ADP-glucose. The polypeptide is Glucosyl-3-phosphoglycerate synthase (Petrotoga mobilis (strain DSM 10674 / SJ95)).